Here is a 1135-residue protein sequence, read N- to C-terminus: Exportin-5 (1135 aa).

In terms of domain architecture, Importin N-terminal spans 32-117 (SQVFLEEIKT…KEKLVTILVD (86 aa)). Positions 630-631 (TE) are pre-siRNA binding.

This sequence belongs to the exportin family. Found in a nuclear export complex with RanGTP, exportin and pre-miRNA.

It localises to the nucleus. The protein localises to the cytoplasm. Its function is as follows. Mediates the nuclear export of proteins bearing a double-stranded RNA binding domain (dsRBD) and double-stranded RNAs (cargos). In terms of biological role, mediates the nuclear export of micro-RNA precursors, which form short hairpins. This chain is Exportin-5 (xpo5), found in Dictyostelium discoideum (Social amoeba).